A 432-amino-acid polypeptide reads, in one-letter code: Beta-fructosidase (432 aa).

Residues 14 to 17 (WMND), Q33, W41, 74 to 75 (FS), Y92, 137 to 138 (RD), 188 to 190 (EIE), T208, and W260 each bind substrate. The active site involves D17.

It belongs to the glycosyl hydrolase 32 family.

It catalyses the reaction Hydrolysis of terminal non-reducing beta-D-fructofuranoside residues in beta-D-fructofuranosides.. Its function is as follows. Hydrolysis of sucrose, raffinose, inulin and levan. Specific for the fructose moiety and the beta-anomeric configuration of the glycosidic linkages of its substrates. The enzyme released fructose from sucrose and raffinose, and the fructose polymer inulin is hydrolyzed quantitatively in an exo-type fashion. This Thermotoga maritima (strain ATCC 43589 / DSM 3109 / JCM 10099 / NBRC 100826 / MSB8) protein is Beta-fructosidase (bfrA).